The primary structure comprises 417 residues: Gamma-glutamyl phosphate reductase (417 aa).

Belongs to the gamma-glutamyl phosphate reductase family.

The protein resides in the cytoplasm. The enzyme catalyses L-glutamate 5-semialdehyde + phosphate + NADP(+) = L-glutamyl 5-phosphate + NADPH + H(+). Its pathway is amino-acid biosynthesis; L-proline biosynthesis; L-glutamate 5-semialdehyde from L-glutamate: step 2/2. In terms of biological role, catalyzes the NADPH-dependent reduction of L-glutamate 5-phosphate into L-glutamate 5-semialdehyde and phosphate. The product spontaneously undergoes cyclization to form 1-pyrroline-5-carboxylate. The polypeptide is Gamma-glutamyl phosphate reductase (Klebsiella pneumoniae subsp. pneumoniae (strain ATCC 700721 / MGH 78578)).